The chain runs to 570 residues: MSLLIDSVPTVAYKDQKPGTSGLRKKTKVFMDEPHYTENFIQATMQSIPNGSEGTTLVVGGDGRFYNDVIMNKIAAVGAANGVRKLVIGQGGLLSTPAASHIIRTYEEKCTGGGIILTASHNPGGPENDLGIKYNLPNGGPAPESVTNAIWEASKKLTHYKIIKNFPKLNLNKLGKNQKYGPLLVDIIDPAKAYVQFLKEIFDFDLIKSFLAKQRKDKGWKLLFDSLNGITGPYGKAIFVDEFGLPAEEVLQNWHPLPDFGGLHPDPNLTYARTLVDRVDREKIAFGAASDGDGDRNMIYGYGPAFVSPGDSVAIIAEYAPEIPYFAKQGIYGLARSFPTSSAIDRVAAKKGLRCYEVPTGWKFFCALFDAKKLSICGEESFGTGSNHIREKDGLWAIIAWLNILAIYHRRNPEKEASIKTIQDEFWNEYGRTFFTRYDYEHIECEQAEKVVALLSEFVSRPNVCGSHFPADESLTVIDCGDFSYRDLDGSISENQGLFVKFSNGTKFVLRLSGTGSSGATIRLYVEKYTDKKENYGQTADVFLKPVINSIVKFLRFKEILGTDEPTVRT.

Ser2 is modified (N-acetylserine). Alpha-D-glucose 1,6-bisphosphate contacts are provided by Arg24 and Ser120. Ser120 functions as the Phosphoserine intermediate in the catalytic mechanism. 4 residues coordinate Mg(2+): Ser120, Asp291, Asp293, and Asp295. Ser120 is subject to Phosphoserine. Asp295, Arg296, Thr360, Glu379, Ser381, and Lys392 together coordinate alpha-D-glucose 1,6-bisphosphate.

The protein belongs to the phosphohexose mutase family. As to quaternary structure, monomer. Mg(2+) is required as a cofactor.

The protein localises to the cytoplasm. It catalyses the reaction alpha-D-glucose 1-phosphate = alpha-D-glucose 6-phosphate. The catalysed reaction is O-phospho-L-seryl-[protein] + alpha-D-glucose 1-phosphate = alpha-D-glucose 1,6-bisphosphate + L-seryl-[protein]. It carries out the reaction alpha-D-glucose 1,6-bisphosphate + L-seryl-[protein] = O-phospho-L-seryl-[protein] + alpha-D-glucose 6-phosphate. Functionally, minor phosphoglucomutase isozyme that catalyzes the reversible interconversion of alpha-D-glucose 1-phosphate and alpha-D-glucose 6-phosphate. The mechanism proceeds via the intermediate compound alpha-D-glucose 1,6-bisphosphate. Constitutes about 10-20% of the phosphoglucomutase activity in the cell. Key enzyme in hexose metabolism. The forward reaction is an essential step in the energy metabolism of galactose since the product of the galactose pathway enzymes in yeast is glucose 1-phosphate. The reverse reaction is an essential step for biosynthesis when carbon sources other than galactose are the energy source because glucose 1-phosphate is the starting point for the synthesis of UDP-glucose, which acts as a precursor for the synthesis of oligosaccharides and trehalose. The protein is Phosphoglucomutase 1 of Saccharomyces cerevisiae (strain ATCC 204508 / S288c) (Baker's yeast).